The primary structure comprises 147 residues: Low molecular weight protein-tyrosine-phosphatase Wzb (147 aa).

Residue Cys-9 is the Nucleophile of the active site. Arg-15 is a catalytic residue. The Proton donor role is filled by Asp-115.

The protein belongs to the low molecular weight phosphotyrosine protein phosphatase family.

The catalysed reaction is O-phospho-L-tyrosyl-[protein] + H2O = L-tyrosyl-[protein] + phosphate. Its pathway is glycan metabolism; exopolysaccharide biosynthesis. In terms of biological role, dephosphorylates Wzc. Required for the extracellular polysaccharide colanic acid synthesis. Probably involved in the export of colanic acid from the cell to medium. Involved in protection of cells against contact-dependent growth inhibition (CDI). This Escherichia coli O157:H7 protein is Low molecular weight protein-tyrosine-phosphatase Wzb (wzb).